A 188-amino-acid chain; its full sequence is Protein GrpE (188 aa).

The interval 1–30 is disordered; the sequence is MTKKTSHHKAEQKEKRAGEESGRESEVLDH. A compositionally biased stretch (basic and acidic residues) spans 8–30; it reads HKAEQKEKRAGEESGRESEVLDH.

The protein belongs to the GrpE family. Homodimer.

The protein localises to the cytoplasm. Participates actively in the response to hyperosmotic and heat shock by preventing the aggregation of stress-denatured proteins, in association with DnaK and GrpE. It is the nucleotide exchange factor for DnaK and may function as a thermosensor. Unfolded proteins bind initially to DnaJ; upon interaction with the DnaJ-bound protein, DnaK hydrolyzes its bound ATP, resulting in the formation of a stable complex. GrpE releases ADP from DnaK; ATP binding to DnaK triggers the release of the substrate protein, thus completing the reaction cycle. Several rounds of ATP-dependent interactions between DnaJ, DnaK and GrpE are required for fully efficient folding. In Chlorobium phaeobacteroides (strain BS1), this protein is Protein GrpE.